The primary structure comprises 369 residues: Queuine tRNA-ribosyltransferase accessory subunit 2 (369 aa).

Positions 263 to 282 (SSKLTEVEEENGNDSSNDQD) are disordered. Zn(2+) contacts are provided by cysteine 308, cysteine 310, cysteine 313, and histidine 339.

Belongs to the queuine tRNA-ribosyltransferase family. QTRT2 subfamily. Heterodimer of a catalytic subunit and an accessory subunit. Requires Zn(2+) as cofactor.

Its subcellular location is the cytoplasm. Non-catalytic subunit of the queuine tRNA-ribosyltransferase (TGT) that catalyzes the base-exchange of a guanine (G) residue with queuine (Q) at position 34 (anticodon wobble position) in tRNAs with GU(N) anticodons (tRNA-Asp, -Asn, -His and -Tyr), resulting in the hypermodified nucleoside queuosine (7-(((4,5-cis-dihydroxy-2-cyclopenten-1-yl)amino)methyl)-7-deazaguanosine). The polypeptide is Queuine tRNA-ribosyltransferase accessory subunit 2 (Trichoplax adhaerens (Trichoplax reptans)).